The chain runs to 23 residues: Septenin 2 (23 aa).

As to expression, expressed in skin glands.

It is found in the secreted. Its function is as follows. May act as an antimicrobial peptide. The sequence is that of Septenin 2 from Osteopilus septentrionalis (Cuban treefrog).